We begin with the raw amino-acid sequence, 55 residues long: Large ribosomal subunit protein bL33A (55 aa).

It belongs to the bacterial ribosomal protein bL33 family.

This is Large ribosomal subunit protein bL33A from Rhodococcus jostii (strain RHA1).